We begin with the raw amino-acid sequence, 101 residues long: Gamma-secretase subunit PEN-2 (101 aa).

Topologically, residues 1 to 17 (MNLERVSNEEKLNLCRK) are cytoplasmic. Positions 18–36 (YYLGGFAFLPFLWLVNIFW) form an intramembrane region, helical. Residues 37–57 (FFREAFLAPAYTEQSQIKGYV) are Cytoplasmic-facing. A helical membrane pass occupies residues 58–78 (WRSAVGFLFWVIILATWITIF). At 79 to 101 (QIYRPRWGALGDYLSFTIPLGTP) the chain is on the lumenal side.

It belongs to the PEN-2 family. The functional gamma-secretase complex is composed of at least four polypeptides: a presenilin homodimer (PSEN1 or PSEN2), nicastrin (NCSTN), APH1 (APH1A or APH1B) and PSENEN.

Its subcellular location is the endoplasmic reticulum membrane. It is found in the golgi apparatus. It localises to the golgi stack membrane. The protein resides in the cell membrane. The protein localises to the membrane. Functionally, essential subunit of the gamma-secretase complex, an endoprotease complex that catalyzes the intramembrane cleavage of integral membrane proteins such as Notch receptors and APP (amyloid-beta precursor protein). The gamma-secretase complex plays a role in Notch and Wnt signaling cascades and regulation of downstream processes via its role in processing key regulatory proteins, and by regulating cytosolic CTNNB1 levels. PSENEN modulates both endoproteolysis of presenilin and gamma-secretase activity. This is Gamma-secretase subunit PEN-2 (Psenen) from Mus musculus (Mouse).